The primary structure comprises 469 residues: Protopanaxadiol 6-hydroxylase (469 aa).

The helical transmembrane segment at 3–23 (LFISSQLLLLLVFCLFLFWNF) threads the bilayer. C416 provides a ligand contact to heme.

Belongs to the cytochrome P450 family. Requires heme as cofactor. As to expression, accumulates ubiquitously in all organs of plants, including roots, stems and leaves.

It is found in the membrane. The enzyme catalyses (20S)-protopanaxadiol + reduced [NADPH--hemoprotein reductase] + O2 = (20S)-protopanaxatriol + oxidized [NADPH--hemoprotein reductase] + H2O + H(+). It functions in the pathway secondary metabolite biosynthesis; terpenoid biosynthesis. Activated by N,N'-dicyclohexylcarbodiimide (DCCD) thus leading to increased ginsenosides accumulation. Its function is as follows. Component of the dammarane-type triterpene saponins (e.g. PPT-type ginsenosides or panaxosides) biosynthetic pathway. Catalyzes the formation of protopanaxatriol from protopanaxadiol during ginsenoside biosynthesis, a class of tetracyclic triterpenoid saponins. This chain is Protopanaxadiol 6-hydroxylase, found in Panax ginseng (Korean ginseng).